The following is a 494-amino-acid chain: Probable serine/threonine-protein kinase BSK3 (494 aa).

Gly2 carries N-myristoyl glycine lipidation. The Protein kinase domain occupies 61-316 (ENIVSEHGEK…SLVQALAPLQ (256 aa)). ATP is bound by residues 67–75 (HGEKAPNVV) and Lys89. Catalysis depends on Asp183, which acts as the Proton acceptor. A phosphoserine mark is found at Ser213 and Ser215. One copy of the TPR repeat lies at 423 to 456 (PTIYARRCLSYLMNDKAEQALSDAMQALVISPTW).

As to quaternary structure, interacts with BRI1 and BSL1. In terms of processing, phosphorylated at Ser-213 and Ser-215 by BRI1. Phosphorylation at Ser-215 is required for its function in the regulation of brassinosteroid signaling. Phosphorylation by BRI1 disrupts the interaction between its TPR and kinase domains, thereby increasing the binding between its kinase domain and BSL1.

The protein resides in the cell membrane. It carries out the reaction L-seryl-[protein] + ATP = O-phospho-L-seryl-[protein] + ADP + H(+). The catalysed reaction is L-threonyl-[protein] + ATP = O-phospho-L-threonyl-[protein] + ADP + H(+). Probable serine/threonine kinase that acts as a positive regulator of brassinosteroid (BR) signaling downstream of BRI1. This chain is Probable serine/threonine-protein kinase BSK3, found in Oryza sativa subsp. japonica (Rice).